A 520-amino-acid chain; its full sequence is Ribonuclease Y (520 aa).

Residues 4-24 (TMFTIISILLSLICLVVGYFV) traverse the membrane as a helical segment. The region spanning 210 to 273 (TVSVVNLPND…ETARIALDKL (64 aa)) is the KH domain. Residues 336 to 429 (VLKHSIEVAH…VAAADALSAA (94 aa)) form the HD domain.

The protein belongs to the RNase Y family.

The protein localises to the cell membrane. Functionally, endoribonuclease that initiates mRNA decay. The chain is Ribonuclease Y from Bacillus pumilus (strain SAFR-032).